Here is a 90-residue protein sequence, read N- to C-terminus: High mobility group nucleosome-binding domain-containing protein 4 (90 aa).

The tract at residues 1–90 (MPKRKAKGDA…QKAEGTGDAK (90 aa)) is disordered. A compositionally biased stretch (basic and acidic residues) spans 7–23 (KGDAKGDKGKVKDEPQR). An ADP-ribosylserine modification is found at Ser29. Residues 37–64 (PEPRPKKAPAKKGEKLAKGRKGKAEVSK) are compositionally biased toward basic and acidic residues. A compositionally biased stretch (polar residues) spans 65-83 (DGNNPAKNRDASTVQSQKA). The residue at position 80 (Ser80) is a Phosphoserine. At Lys82 the chain carries N6-acetyllysine.

The protein belongs to the HMGN family.

Its subcellular location is the nucleus. The chain is High mobility group nucleosome-binding domain-containing protein 4 (HMGN4) from Bos taurus (Bovine).